Consider the following 202-residue polypeptide: Superoxide dismutase [Fe] (202 aa).

Fe cation-binding residues include His-27, His-82, Asp-164, and His-168.

This sequence belongs to the iron/manganese superoxide dismutase family. As to quaternary structure, homodimer. It depends on Fe cation as a cofactor.

It carries out the reaction 2 superoxide + 2 H(+) = H2O2 + O2. Its function is as follows. Destroys superoxide anion radicals which are normally produced within the cells and which are toxic to biological systems. The protein is Superoxide dismutase [Fe] (sodA) of Enterococcus faecalis (strain ATCC 700802 / V583).